Reading from the N-terminus, the 268-residue chain is Embryonic abundant protein USP87 (268 aa).

An N-terminal signal peptide occupies residues 1–22 (MEFAHLTVLSLFCLAFVGITAT). 5 consecutive repeat copies span residues 50–55 (GKTNSL), 83–88 (GNTNSV), 101–106 (GVTDSI), 166–183 (YVVEDVKKVGDNAVMCHR), and 202–222 (YVVSLVASDGTKTKALTVCHH). Residues 50–106 (GKTNSLPIKSEELKQYSTLFFEHDLHPRKNFILGNTNSVGSIIRPFTKSRQGVTDSI) form a 3 X 6 AA approximate repeats region. The 192-residue stretch at 68–259 (LFFEHDLHPR…GNKAAAWVPN (192 aa)) folds into the BURP domain. Residues 166–222 (YVVEDVKKVGDNAVMCHRLNFEKVVFNCHQVRDTTAYVVSLVASDGTKTKALTVCHH) form a 2 X approximate repeats region. N259 carries an N-linked (GlcNAc...) asparagine glycan.

In terms of tissue distribution, seed.

This chain is Embryonic abundant protein USP87, found in Vicia faba (Broad bean).